Here is a 336-residue protein sequence, read N- to C-terminus: Large ribosomal subunit protein uL3 (336 aa).

Residues 1 to 34 (MVRHHQPRKGSVAFSPRKRAAKETPRIKSWPQND) form a disordered region.

It belongs to the universal ribosomal protein uL3 family. In terms of assembly, part of the 50S ribosomal subunit. Forms a cluster with proteins L14 and L24e.

In terms of biological role, one of the primary rRNA binding proteins, it binds directly near the 3'-end of the 23S rRNA, where it nucleates assembly of the 50S subunit. This is Large ribosomal subunit protein uL3 from Methanobrevibacter smithii (strain ATCC 35061 / DSM 861 / OCM 144 / PS).